The chain runs to 138 residues: Small ribosomal subunit protein uS11c (138 aa).

A disordered region spans residues 1-24; the sequence is MAKSPPRSGSRRPGRIGSRKSGRR. Basic residues predominate over residues 9–24; sequence GSRRPGRIGSRKSGRR.

It belongs to the universal ribosomal protein uS11 family. As to quaternary structure, part of the 30S ribosomal subunit.

The protein localises to the plastid. It localises to the chloroplast. The chain is Small ribosomal subunit protein uS11c from Citrus sinensis (Sweet orange).